Consider the following 433-residue polypeptide: Energy-coupling factor transporter ATP-binding protein EcfA2 (433 aa).

Residues Val-25–Gln-389 form the ABC transporter domain. Residue Gly-62–Ser-69 coordinates ATP.

Belongs to the ABC transporter superfamily. Energy-coupling factor EcfA family. In terms of assembly, forms a stable energy-coupling factor (ECF) transporter complex composed of 2 membrane-embedded substrate-binding proteins (S component), 2 ATP-binding proteins (A component) and 2 transmembrane proteins (T component).

Its subcellular location is the cell membrane. Functionally, ATP-binding (A) component of a common energy-coupling factor (ECF) ABC-transporter complex. Unlike classic ABC transporters this ECF transporter provides the energy necessary to transport a number of different substrates. The polypeptide is Energy-coupling factor transporter ATP-binding protein EcfA2 (Ureaplasma parvum serovar 3 (strain ATCC 700970)).